Reading from the N-terminus, the 543-residue chain is Chaperonin GroEL (543 aa).

ATP contacts are provided by residues 29–32 (TLGP), 86–90 (DGTTT), Gly413, 476–478 (NAA), and Asp492.

It belongs to the chaperonin (HSP60) family. In terms of assembly, forms a cylinder of 14 subunits composed of two heptameric rings stacked back-to-back. Interacts with the co-chaperonin GroES.

The protein localises to the cytoplasm. The catalysed reaction is ATP + H2O + a folded polypeptide = ADP + phosphate + an unfolded polypeptide.. In terms of biological role, together with its co-chaperonin GroES, plays an essential role in assisting protein folding. The GroEL-GroES system forms a nano-cage that allows encapsulation of the non-native substrate proteins and provides a physical environment optimized to promote and accelerate protein folding. This Streptococcus pyogenes serotype M49 (strain NZ131) protein is Chaperonin GroEL.